Consider the following 397-residue polypeptide: 1-deoxy-D-xylulose 5-phosphate reductoisomerase (397 aa).

The NADPH site is built by T17, G18, S19, I20, N47, and N130. Position 131 (K131) interacts with 1-deoxy-D-xylulose 5-phosphate. E132 contributes to the NADPH binding site. Mn(2+) is bound at residue D156. S157, E158, S182, and H205 together coordinate 1-deoxy-D-xylulose 5-phosphate. A Mn(2+)-binding site is contributed by E158. G211 is a binding site for NADPH. Positions 218, 223, 224, and 227 each coordinate 1-deoxy-D-xylulose 5-phosphate. Position 227 (E227) interacts with Mn(2+).

Belongs to the DXR family. Mg(2+) serves as cofactor. It depends on Mn(2+) as a cofactor.

It carries out the reaction 2-C-methyl-D-erythritol 4-phosphate + NADP(+) = 1-deoxy-D-xylulose 5-phosphate + NADPH + H(+). It functions in the pathway isoprenoid biosynthesis; isopentenyl diphosphate biosynthesis via DXP pathway; isopentenyl diphosphate from 1-deoxy-D-xylulose 5-phosphate: step 1/6. Functionally, catalyzes the NADPH-dependent rearrangement and reduction of 1-deoxy-D-xylulose-5-phosphate (DXP) to 2-C-methyl-D-erythritol 4-phosphate (MEP). In Rhizobium rhizogenes (strain K84 / ATCC BAA-868) (Agrobacterium radiobacter), this protein is 1-deoxy-D-xylulose 5-phosphate reductoisomerase.